The sequence spans 310 residues: p-hydroxybenzoic acid efflux pump subunit AaeA (310 aa).

The chain crosses the membrane as a helical span at residues 12–32; sequence AITVVLVILAFIAIFNAWVYY.

The protein belongs to the membrane fusion protein (MFP) (TC 8.A.1) family.

It localises to the cell inner membrane. Forms an efflux pump with AaeB. The chain is p-hydroxybenzoic acid efflux pump subunit AaeA from Escherichia coli O17:K52:H18 (strain UMN026 / ExPEC).